Here is a 355-residue protein sequence, read N- to C-terminus: Protein RecA (355 aa).

67-74 (GPESSGKT) is an ATP binding site.

Belongs to the RecA family.

Its subcellular location is the cytoplasm. Its function is as follows. Can catalyze the hydrolysis of ATP in the presence of single-stranded DNA, the ATP-dependent uptake of single-stranded DNA by duplex DNA, and the ATP-dependent hybridization of homologous single-stranded DNAs. It interacts with LexA causing its activation and leading to its autocatalytic cleavage. In Shewanella halifaxensis (strain HAW-EB4), this protein is Protein RecA.